We begin with the raw amino-acid sequence, 350 residues long: Phenylalanine--tRNA ligase alpha subunit (350 aa).

E259 is a binding site for Mg(2+).

Belongs to the class-II aminoacyl-tRNA synthetase family. Phe-tRNA synthetase alpha subunit type 1 subfamily. In terms of assembly, tetramer of two alpha and two beta subunits. The cofactor is Mg(2+).

It localises to the cytoplasm. It catalyses the reaction tRNA(Phe) + L-phenylalanine + ATP = L-phenylalanyl-tRNA(Phe) + AMP + diphosphate + H(+). This Rickettsia typhi (strain ATCC VR-144 / Wilmington) protein is Phenylalanine--tRNA ligase alpha subunit.